A 360-amino-acid chain; its full sequence is Phospho-N-acetylmuramoyl-pentapeptide-transferase (360 aa).

The next 10 membrane-spanning stretches (helical) occupy residues 27 to 47, 74 to 94, 99 to 119, 135 to 155, 165 to 185, 199 to 219, 236 to 256, 263 to 283, 288 to 308, and 337 to 357; these read GATA…IAAL, TMGG…WANL, VWVV…DDYL, LLLE…LGTP, INGF…FVIV, GLAI…AYLA, AGEL…FLWF, IFMG…VAVA, IVLA…IVQV, and QVVV…LSTL.

This sequence belongs to the glycosyltransferase 4 family. MraY subfamily. Mg(2+) is required as a cofactor.

It localises to the cell inner membrane. It catalyses the reaction UDP-N-acetyl-alpha-D-muramoyl-L-alanyl-gamma-D-glutamyl-meso-2,6-diaminopimeloyl-D-alanyl-D-alanine + di-trans,octa-cis-undecaprenyl phosphate = di-trans,octa-cis-undecaprenyl diphospho-N-acetyl-alpha-D-muramoyl-L-alanyl-D-glutamyl-meso-2,6-diaminopimeloyl-D-alanyl-D-alanine + UMP. It functions in the pathway cell wall biogenesis; peptidoglycan biosynthesis. Catalyzes the initial step of the lipid cycle reactions in the biosynthesis of the cell wall peptidoglycan: transfers peptidoglycan precursor phospho-MurNAc-pentapeptide from UDP-MurNAc-pentapeptide onto the lipid carrier undecaprenyl phosphate, yielding undecaprenyl-pyrophosphoryl-MurNAc-pentapeptide, known as lipid I. The chain is Phospho-N-acetylmuramoyl-pentapeptide-transferase from Methylocella silvestris (strain DSM 15510 / CIP 108128 / LMG 27833 / NCIMB 13906 / BL2).